Reading from the N-terminus, the 490-residue chain is Probable cytosol aminopeptidase (490 aa).

Mn(2+) contacts are provided by lysine 257 and aspartate 262. Lysine 269 is an active-site residue. Residues aspartate 281, aspartate 341, and glutamate 343 each contribute to the Mn(2+) site. Residue arginine 345 is part of the active site.

This sequence belongs to the peptidase M17 family. Mn(2+) serves as cofactor.

It is found in the cytoplasm. It catalyses the reaction Release of an N-terminal amino acid, Xaa-|-Yaa-, in which Xaa is preferably Leu, but may be other amino acids including Pro although not Arg or Lys, and Yaa may be Pro. Amino acid amides and methyl esters are also readily hydrolyzed, but rates on arylamides are exceedingly low.. It carries out the reaction Release of an N-terminal amino acid, preferentially leucine, but not glutamic or aspartic acids.. In terms of biological role, presumably involved in the processing and regular turnover of intracellular proteins. Catalyzes the removal of unsubstituted N-terminal amino acids from various peptides. The protein is Probable cytosol aminopeptidase of Prochlorococcus marinus (strain AS9601).